The chain runs to 559 residues: Nucleoprotein (559 aa).

The tract at residues 53-235 (MRKEKRTDSD…ITQEQSQINI (183 aa)) is binding site for the cap structure m7GTP. Asp-378 and Glu-380 together coordinate Mn(2+). Residues Glu-388, Cys-495, His-498, and Cys-519 each coordinate Zn(2+). Asp-523 contributes to the Mn(2+) binding site.

It belongs to the arenaviridae nucleocapsid protein family. In terms of assembly, homomultimerizes to form the nucleocapsid. Binds to viral genomic RNA. Interacts with glycoprotein G2. Interacts with protein Z; this interaction probably directs the encapsidated genome to budding sites. Interacts with protein L; this interaction does not interfere with Z-L interaction. Interacts with host IKBKE (via Protein kinase domain); the interaction inhibits IKBKE kinase activity.

The protein localises to the virion. Its subcellular location is the host cytoplasm. Encapsidates the genome, protecting it from nucleases. The encapsidated genomic RNA is termed the nucleocapsid (NC). Serves as template for viral transcription and replication. The increased presence of protein N in host cell does not seem to trigger the switch from transcription to replication as observed in other negative strain RNA viruses. Through the interaction with host IKBKE, strongly inhibits the phosphorylation and nuclear translocation of host IRF3, a protein involved in interferon activation pathway, leading to the inhibition of interferon-beta and IRF3-dependent promoters activation. Also encodes a functional 3'-5' exoribonuclease that degrades preferentially dsRNA substrates and thereby participates in the suppression of interferon induction. The chain is Nucleoprotein from Sooretamys angouya (Paraguayan rice rat).